We begin with the raw amino-acid sequence, 89 residues long: Small ribosomal subunit protein uS14A (89 aa).

Residues 34–54 (ESLRKLPRDSNPNRLKNRDKI) form a disordered region.

It belongs to the universal ribosomal protein uS14 family. Part of the 30S ribosomal subunit. Contacts proteins S3 and S10.

In terms of biological role, binds 16S rRNA, required for the assembly of 30S particles and may also be responsible for determining the conformation of the 16S rRNA at the A site. In Streptococcus pyogenes serotype M1, this protein is Small ribosomal subunit protein uS14A.